We begin with the raw amino-acid sequence, 510 residues long: Bifunctional purine biosynthesis protein PurH (510 aa).

Positions Met1–Val143 constitute an MGS-like domain.

This sequence belongs to the PurH family.

It catalyses the reaction (6R)-10-formyltetrahydrofolate + 5-amino-1-(5-phospho-beta-D-ribosyl)imidazole-4-carboxamide = 5-formamido-1-(5-phospho-D-ribosyl)imidazole-4-carboxamide + (6S)-5,6,7,8-tetrahydrofolate. It carries out the reaction IMP + H2O = 5-formamido-1-(5-phospho-D-ribosyl)imidazole-4-carboxamide. It functions in the pathway purine metabolism; IMP biosynthesis via de novo pathway; 5-formamido-1-(5-phospho-D-ribosyl)imidazole-4-carboxamide from 5-amino-1-(5-phospho-D-ribosyl)imidazole-4-carboxamide (10-formyl THF route): step 1/1. The protein operates within purine metabolism; IMP biosynthesis via de novo pathway; IMP from 5-formamido-1-(5-phospho-D-ribosyl)imidazole-4-carboxamide: step 1/1. The protein is Bifunctional purine biosynthesis protein PurH of Deinococcus radiodurans (strain ATCC 13939 / DSM 20539 / JCM 16871 / CCUG 27074 / LMG 4051 / NBRC 15346 / NCIMB 9279 / VKM B-1422 / R1).